The primary structure comprises 71 residues: Holin (71 aa).

Residues 1-24 (MKEFLTAATSSTGGASLVGAATGQ) lie on the Cytoplasmic side of the membrane. A helical; Signal-anchor for type II membrane protein transmembrane segment spans residues 25-45 (LYIAGATFICFLLFGAWGAYW). Residues 46–71 (KYRDSKAIQEALNDGDLNKALKIRGR) are Periplasmic-facing.

Homomultimer.

The protein resides in the host cell inner membrane. Its function is as follows. Accumulates harmlessly in the cytoplasmic membrane until it reaches a critical concentration that triggers the formation of nanometer-scale pores (pinholes) causing host cell membrane depolarization and endolysin refolding and release into the periplasmic space. Once the pinholin has permeabilized the host cell membrane, the SAR-endolysin is released into the periplasm and breaks down the peptidoglycan layer. Determines the precise timing of host cell lysis. Participates with the SAR-endolysin and the U-spanin protein in the sequential events which lead to the programmed host cell lysis releasing the mature viral particles from the host cell. This is Holin from Escherichia coli (Bacteriophage T1).